Here is a 251-residue protein sequence, read N- to C-terminus: Insulin-induced gene 1 protein (251 aa).

The Cytoplasmic portion of the chain corresponds to 1-58 (MPRLEEHCWSCSCSTSVKTKDLSSAGWIVCKTGEMMSIITSVLSHAYGSLHSLQSANL). The chain crosses the membrane as a helical span at residues 59–81 (IRRGLVLFIVGVVLALVLNLLQI). The Extracellular portion of the chain corresponds to 82–100 (QRNVTLFPEEVLDTLFSSA). The chain crosses the membrane as a helical span at residues 101-118 (WWIPLCCGTAAAVVGLLY). At 119 to 133 (PCLDHHLGEPHKFKR) the chain is on the cytoplasmic side. The helical transmembrane segment at 134 to 156 (EWASVMRCIAVFVGINHASAKLD) threads the bilayer. Topologically, residues 157 to 159 (FAN) are extracellular. Residues 160 to 178 (NVQLSLTLAALSLGLWWTF) form a helical membrane-spanning segment. Over 179–183 (DRSRS) the chain is Cytoplasmic. The helical transmembrane segment at 184-205 (GFGLGLTTALLATLIAQLLVYN) threads the bilayer. Residues 206 to 219 (GIYQYTSPDFLYVR) lie on the Extracellular side of the membrane. A helical membrane pass occupies residues 220–237 (SWLPCIFFSGGVTVGNIG). Residues 238-251 (RQLAMGSTEKIHND) are Cytoplasmic-facing. The KxHxx motif lies at 245–251 (TEKIHND).

The protein belongs to the INSIG family. Interacts with scap; interaction is direct and only takes place in the presence of sterols; it prevents interaction between scap and the coat protein complex II (COPII). Associates with the SCAP-SREBP complex; association is mediated via its interaction with scap and only takes place in the presence of sterols.

It is found in the endoplasmic reticulum membrane. Functionally, oxysterol-binding protein that mediates feedback control of cholesterol synthesis by controlling both endoplasmic reticulum to Golgi transport of scap and degradation of hmgcr. Acts as a negative regulator of cholesterol biosynthesis by mediating the retention of the SCAP-SREBP complex in the endoplasmic reticulum, thereby blocking the processing of sterol regulatory element-binding proteins (SREBPs). Binds oxysterol, including 25-hydroxycholesterol, regulating interaction with scap and retention of the SCAP-SREBP complex in the endoplasmic reticulum. In presence of oxysterol, interacts with scap, retaining the SCAP-SREBP complex in the endoplasmic reticulum, thereby preventing scap from escorting SREBPs to the Golgi. Sterol deprivation reduces oxysterol-binding, disrupting the interaction between insig1 and scap, thereby promoting Golgi transport of the SCAP-SREBP complex, followed by processing and nuclear translocation of SREBPs. Also regulates cholesterol synthesis by regulating degradation of hmgcr. The protein is Insulin-induced gene 1 protein of Danio rerio (Zebrafish).